The following is a 186-amino-acid chain: uncharacterized protein (186 aa).

Belongs to the geranylgeranyl reductase family. ChlP subfamily.

This is an uncharacterized protein from Methanosarcina barkeri.